A 648-amino-acid polypeptide reads, in one-letter code: DNA ligase (648 aa).

Residues D30–D34 and S79–Q80 each bind NAD(+). K110 serves as the catalytic N6-AMP-lysine intermediate. NAD(+)-binding residues include R131, E165, K280, and K304. The Zn(2+) site is built by C398, C401, C414, and C419. The BRCT domain occupies V573 to F648.

The protein belongs to the NAD-dependent DNA ligase family. LigA subfamily. The cofactor is Mg(2+). Requires Mn(2+) as cofactor.

It carries out the reaction NAD(+) + (deoxyribonucleotide)n-3'-hydroxyl + 5'-phospho-(deoxyribonucleotide)m = (deoxyribonucleotide)n+m + AMP + beta-nicotinamide D-nucleotide.. Functionally, DNA ligase that catalyzes the formation of phosphodiester linkages between 5'-phosphoryl and 3'-hydroxyl groups in double-stranded DNA using NAD as a coenzyme and as the energy source for the reaction. It is essential for DNA replication and repair of damaged DNA. The sequence is that of DNA ligase from Aliarcobacter butzleri (strain RM4018) (Arcobacter butzleri).